Consider the following 149-residue polypeptide: Ribosome maturation factor RimP (149 aa).

The protein belongs to the RimP family.

It is found in the cytoplasm. Its function is as follows. Required for maturation of 30S ribosomal subunits. The protein is Ribosome maturation factor RimP of Neisseria meningitidis serogroup A / serotype 4A (strain DSM 15465 / Z2491).